The chain runs to 118 residues: Large ribosomal subunit protein bL20 (118 aa).

The protein belongs to the bacterial ribosomal protein bL20 family.

In terms of biological role, binds directly to 23S ribosomal RNA and is necessary for the in vitro assembly process of the 50S ribosomal subunit. It is not involved in the protein synthesizing functions of that subunit. The sequence is that of Large ribosomal subunit protein bL20 from Shewanella baltica (strain OS223).